Reading from the N-terminus, the 687-residue chain is Adhesion G-protein coupled receptor G1 (687 aa).

The N-terminal stretch at 1-25 (MTAQSLLQTTLFLLSLLFLVQGAHG) is a signal peptide. A heparin-binding site is contributed by 26–33 (RGHREDFR). Topologically, residues 26 to 402 (RGHREDFRFC…VEVDAVHKHY (377 aa)) are extracellular. Intrachain disulfides connect Cys35–Cys91 and Cys121–Cys177. N-linked (GlcNAc...) asparagine glycans are attached at residues Asn39, Asn148, and Asn171. Heparin is bound at residue 190-200 (LKHPQKASRRP). The GAIN-B domain maps to 224–395 (DTVSFEEDRI…AVLMVSSVEV (172 aa)). N-linked (GlcNAc...) asparagine glycans are attached at residues Asn234, Asn303, Asn324, and Asn341. 2 disulfide bridges follow: Cys346/Cys377 and Cys366/Cys379. Residues 346–395 (CVFWVEDPTLSSPGHWSSAGCETVRRETQTSCFCNHLTYFAVLMVSSVEV) are GPS. A stachel region spans residues 384 to 397 (YFAVLMVSSVEVDA). Residues 403–423 (LSLLSYVGCVVSALACIVTIA) traverse the membrane as a helical segment. Residues 424-442 (AYLCSRRKPRDYTIKVHMN) lie on the Cytoplasmic side of the membrane. A helical transmembrane segment spans residues 443–463 (LLLAVFLLDTSFLLSEPVALT). The Extracellular segment spans residues 464-470 (GSEAGCR). A helical transmembrane segment spans residues 471–491 (ASAIFLHFSLLACLSWMGLEG). Topologically, residues 492 to 512 (YNLYRLVVEVFGTYVPGYLLK) are cytoplasmic. Residues 513 to 533 (LSAMGWGFPIFLVTLVALVDV) form a helical membrane-spanning segment. Over 534 to 570 (DNYGPIILAVHRTPEGVIYPSMCWIRDSLVSYITNLG) the chain is Extracellular. Residues 571-591 (LFSLVFLFNMAMLATMVVQIL) form a helical membrane-spanning segment. Residues 592–603 (RLRPHTQKWSHV) lie on the Cytoplasmic side of the membrane. A helical transmembrane segment spans residues 604 to 624 (LTLLGLSLVLGLPWALIFFSF). Topologically, residues 625–630 (ASGTFQ) are extracellular. The chain crosses the membrane as a helical span at residues 631–651 (LVVLYLFSIITSFQGFLIFIW). The Cytoplasmic segment spans residues 652–687 (YWSMRLQARGGPSPLKSNSDSARLPISSGSTSSSRI). A disordered region spans residues 664–687 (SPLKSNSDSARLPISSGSTSSSRI). Residues 678–687 (SSGSTSSSRI) are compositionally biased toward low complexity.

The protein belongs to the G-protein coupled receptor 2 family. LN-TM7 subfamily. As to quaternary structure, heterodimer of 2 chains generated by proteolytic processing; the large extracellular N-terminal fragment (ADGRG1 NT) and the membrane-bound C-terminal fragment (ADGRG1-CT) predominantly remain associated and non-covalently linked. ADGRG1 NT self-associates in a trans-trans manner; the homophilic interaction enhances receptor signaling. Interacts with TGM2. Interacts with heparin; leading to the reduction of ADGRG1 shedding. Interacts with COL3A1. Part of a GPCR-tetraspanin complex at least consisting of ADGRG1, CD81, eventually CD9, and GNA11 in which CD81 is enhancing the association of ADGRG1 with GNA11. In terms of processing, autoproteolytically cleaved into 2 fragments; the large extracellular N-terminal fragment (ADGRG1 NT) and the membrane-bound C-terminal fragment (ADGRG1 CT) predominantly remain associated and non-covalently linked. Shedding to yield the secreted ADGRG1 N-terminal fragment seems to involve metalloprotease(s). Ubiquitinated. Undergoes polyubiquitination upon activation.

It localises to the cell membrane. The protein localises to the secreted. It is found in the membrane raft. With respect to regulation, forms a heterodimer of 2 chains generated by proteolytic processing that remain associated through non-covalent interactions mediated by the GAIN-B domain. In the inactivated receptor, the Stachel sequence (also named stalk) is embedded in the GAIN-B domain, where it adopts a beta-strand conformation. On activation, the Stachel moves into the 7 transmembrane region and adopts a twisted hook-shaped configuration that forms contacts within the receptor, leading to coupling of a G-alpha protein, which activates signaling. The cleaved GAIN-B and N-terminal domains can then dissociate from the rest of the receptor. Its function is as follows. Adhesion G-protein coupled receptor (aGPCR) for steroid hormone 17alpha-hydroxypregnenolone (17-OH), which is involved in cell adhesion and cell-cell interactions. Ligand binding causes a conformation change that triggers signaling via guanine nucleotide-binding proteins (G proteins) and modulates the activity of downstream effectors, such as RhoA pathway. ADGRG1 is coupled to G(12) and/or G(13) G proteins (GNA12 and GNA13, respectively) and mediates the activation Rho small GTPases. Acts as a potent suppressor of ferroptosis: binding to 17-OH-binding initiates signaling that down-regulates CD36 and alleviates ferroptosis-induced liver injury. Ligand-binding also induces cell adhesion activity via association with proteins such as collagen III/COL3A1 and TGM2. Mediates cell matrix adhesion in developing neurons and hematopoietic stem cells. Involved in cortical development, specifically in maintenance of the pial basement membrane integrity and in cortical lamination: association with COL3A1 in the developing brain inhibits neuronal migration via activation of the RhoA pathway. Together with TGM2, acts as a regulator of myelination and myelin repair in oligodendrocyte precursor cells. Acts as a hemostatic sensor of shear force: G protein-coupled receptor signaling is activated in response to shear force in platelets, promoting G(13) G protein signaling, and platelet shape change and aggregation in a COL3A1-dependent manner. Acts as an inhibitor of VEGFA production thereby inhibiting angiogenesis through a signaling pathway mediated by PRKCA. Plays a role in the maintenance of hematopoietic stem cells in bone marrow niche. Plays an essential role in testis development. The chain is Adhesion G-protein coupled receptor G1 (ADGRG1) from Gorilla gorilla gorilla (Western lowland gorilla).